Here is a 235-residue protein sequence, read N- to C-terminus: Geranylgeranylglyceryl phosphate synthase (235 aa).

Sn-glycerol 1-phosphate is bound at residue lysine 13. 2 residues coordinate Mg(2+): aspartate 15 and threonine 42. Residues 162–167 (YVEYSG), glycine 192, and 212–213 (GD) each bind sn-glycerol 1-phosphate.

This sequence belongs to the GGGP/HepGP synthase family. Group I subfamily. It depends on Mg(2+) as a cofactor.

It localises to the cytoplasm. The enzyme catalyses sn-glycerol 1-phosphate + (2E,6E,10E)-geranylgeranyl diphosphate = sn-3-O-(geranylgeranyl)glycerol 1-phosphate + diphosphate. It functions in the pathway membrane lipid metabolism; glycerophospholipid metabolism. In terms of biological role, prenyltransferase that catalyzes the transfer of the geranylgeranyl moiety of geranylgeranyl diphosphate (GGPP) to the C3 hydroxyl of sn-glycerol-1-phosphate (G1P). This reaction is the first ether-bond-formation step in the biosynthesis of archaeal membrane lipids. The polypeptide is Geranylgeranylglyceryl phosphate synthase (Natronomonas pharaonis (strain ATCC 35678 / DSM 2160 / CIP 103997 / JCM 8858 / NBRC 14720 / NCIMB 2260 / Gabara) (Halobacterium pharaonis)).